Consider the following 155-residue polypeptide: UPF0461 protein C5orf24 homolog (155 aa).

The span at 60-69 (NETHLQTSTS) shows a compositional bias: polar residues. The interval 60–155 (NETHLQTSTS…QQALMCSSDA (96 aa)) is disordered. Residues 78 to 92 (LKKKKNVGRSGKRGR) show a composition bias toward basic residues. The span at 94 to 107 (SGTTKSAGYRTSTG) shows a compositional bias: polar residues.

Belongs to the UPF0461 family.

The chain is UPF0461 protein C5orf24 homolog from Xenopus laevis (African clawed frog).